We begin with the raw amino-acid sequence, 328 residues long: Tryptophan--tRNA ligase (328 aa).

Residues 8–10 (RPT) and 16–17 (GH) contribute to the ATP site. Residues 9-17 (PTGKLHIGH) carry the 'HIGH' region motif. Asp136 contributes to the L-tryptophan binding site. Residues 148-150 (GED), Leu186, and 193-197 (KMSKS) each bind ATP. Positions 193-197 (KMSKS) match the 'KMSKS' region motif.

The protein belongs to the class-I aminoacyl-tRNA synthetase family. In terms of assembly, homodimer.

Its subcellular location is the cytoplasm. It carries out the reaction tRNA(Trp) + L-tryptophan + ATP = L-tryptophyl-tRNA(Trp) + AMP + diphosphate + H(+). Catalyzes the attachment of tryptophan to tRNA(Trp). The protein is Tryptophan--tRNA ligase of Thermotoga maritima (strain ATCC 43589 / DSM 3109 / JCM 10099 / NBRC 100826 / MSB8).